The sequence spans 272 residues: F-actin-capping protein subunit beta (272 aa).

This sequence belongs to the F-actin-capping protein beta subunit family. As to quaternary structure, component of the F-actin capping complex, composed of a heterodimer of an alpha and a beta subunit.

Its subcellular location is the cytoplasm. The protein resides in the cytoskeleton. In terms of biological role, F-actin-capping proteins bind in a Ca(2+)-independent manner to the fast growing ends of actin filaments (barbed end) thereby blocking the exchange of subunits at these ends. Unlike other capping proteins (such as gelsolin and severin), these proteins do not sever actin filaments. This chain is F-actin-capping protein subunit beta (acpA), found in Dictyostelium discoideum (Social amoeba).